We begin with the raw amino-acid sequence, 151 residues long: Ribosome-binding factor A (151 aa).

The interval 120–151 (RSPKVVRDLDDTSSDDTSPDANTDTDKETDAE) is disordered.

It belongs to the RbfA family. As to quaternary structure, monomer. Binds 30S ribosomal subunits, but not 50S ribosomal subunits or 70S ribosomes.

It localises to the cytoplasm. One of several proteins that assist in the late maturation steps of the functional core of the 30S ribosomal subunit. Associates with free 30S ribosomal subunits (but not with 30S subunits that are part of 70S ribosomes or polysomes). Required for efficient processing of 16S rRNA. May interact with the 5'-terminal helix region of 16S rRNA. This is Ribosome-binding factor A from Xanthobacter autotrophicus (strain ATCC BAA-1158 / Py2).